We begin with the raw amino-acid sequence, 417 residues long: Phosphoribosylamine--glycine ligase (417 aa).

The 200-residue stretch at 108–307 (KRIMDEAGVP…LSTLLFAAAT (200 aa)) folds into the ATP-grasp domain. 134-188 (LDEFGAPYVVKADGLAAGKGVIVTEDRAAALAHAARYLTHGSVLVEEFLDGEEVS) provides a ligand contact to ATP. Mg(2+)-binding residues include E277 and N279.

Belongs to the GARS family. Requires Mg(2+) as cofactor. It depends on Mn(2+) as a cofactor.

The catalysed reaction is 5-phospho-beta-D-ribosylamine + glycine + ATP = N(1)-(5-phospho-beta-D-ribosyl)glycinamide + ADP + phosphate + H(+). It functions in the pathway purine metabolism; IMP biosynthesis via de novo pathway; N(1)-(5-phospho-D-ribosyl)glycinamide from 5-phospho-alpha-D-ribose 1-diphosphate: step 2/2. This is Phosphoribosylamine--glycine ligase from Leifsonia xyli subsp. xyli (strain CTCB07).